Here is a 318-residue protein sequence, read N- to C-terminus: Thymidylate synthase (318 aa).

DUMP-binding positions include R25 and 180-181 (RR). Catalysis depends on C200, which acts as the Nucleophile. Residues 220–223 (RSGD), N231, and 261–263 (HIY) each bind dUMP. Position 223 (D223) interacts with (6R)-5,10-methylene-5,6,7,8-tetrahydrofolate. Residue A317 participates in (6R)-5,10-methylene-5,6,7,8-tetrahydrofolate binding.

It belongs to the thymidylate synthase family. Bacterial-type ThyA subfamily. Homodimer.

It localises to the cytoplasm. The enzyme catalyses dUMP + (6R)-5,10-methylene-5,6,7,8-tetrahydrofolate = 7,8-dihydrofolate + dTMP. Its pathway is pyrimidine metabolism; dTTP biosynthesis. Catalyzes the reductive methylation of 2'-deoxyuridine-5'-monophosphate (dUMP) to 2'-deoxythymidine-5'-monophosphate (dTMP) while utilizing 5,10-methylenetetrahydrofolate (mTHF) as the methyl donor and reductant in the reaction, yielding dihydrofolate (DHF) as a by-product. This enzymatic reaction provides an intracellular de novo source of dTMP, an essential precursor for DNA biosynthesis. The sequence is that of Thymidylate synthase from Bacillus cereus (strain ZK / E33L).